A 337-amino-acid chain; its full sequence is Fructose-1,6-bisphosphatase class 1 (337 aa).

Mg(2+) contacts are provided by E94, D116, L118, and D119. Substrate-binding positions include 119-122 (DGSS), N210, and K276. A Mg(2+)-binding site is contributed by E282.

It belongs to the FBPase class 1 family. In terms of assembly, homotetramer. Requires Mg(2+) as cofactor.

It is found in the cytoplasm. The catalysed reaction is beta-D-fructose 1,6-bisphosphate + H2O = beta-D-fructose 6-phosphate + phosphate. Its pathway is carbohydrate biosynthesis; gluconeogenesis. The sequence is that of Fructose-1,6-bisphosphatase class 1 from Burkholderia multivorans (strain ATCC 17616 / 249).